A 278-amino-acid chain; its full sequence is Esterase dbaE (278 aa).

Residues Ser-124, Asp-220, and His-248 each act as charge relay system in the active site.

It belongs to the LovG family.

The protein operates within secondary metabolite biosynthesis. In terms of biological role, esterase; part of the gene cluster that mediates the biosynthesis of the antibiotic 2,4-dihydroxy-3-methyl-6-(2-oxopropyl)benzaldehyde (DHMBA) and its derivatives. The direct non-reducing polyketide synthase dbaI product is 2,4-dihydroxy-3-methyl-6-(2-oxopropyl)benzaldehyde (DHMBA), produced by condensation of one acetyl-CoA starter unit with 4 malonyl-CoA units and one methylation step. The FAD-dependent monooxygenase dbaH is responsible for the synthesis of yellow pigments derived from the oxidation of DHMBA. The roles of dbaB, C, E and F have still to be determined. The protein is Esterase dbaE of Emericella nidulans (strain FGSC A4 / ATCC 38163 / CBS 112.46 / NRRL 194 / M139) (Aspergillus nidulans).